A 593-amino-acid polypeptide reads, in one-letter code: Efflux pump FUB11 (593 aa).

The disordered stretch occupies residues 1 to 45; it reads MAIDPQPSSPSLSSETIANDTIGNDNNVNEPSVEPKTQEHQHTVP. Positions 9–30 are enriched in polar residues; that stretch reads SPSLSSETIANDTIGNDNNVNE. An N-linked (GlcNAc...) asparagine glycan is attached at Asn-19. 12 helical membrane-spanning segments follow: residues 98-118, 135-155, 167-187, 195-215, 227-247, 254-274, 337-357, 367-387, 410-430, 438-458, 468-488, and 503-523; these read WAFV…SSAY, VATL…LVWA, FFFT…AGSI, FLTG…IADM, MFSG…GFLG, WLHG…TVFI, IYIS…PIVF, IGGL…ISFA, LPPA…FAWT, IVPI…FMAL, IFAA…GAAF, and WASS…FLFY. Residues 570–593 form a disordered region; that stretch reads THNSHASAAHSHGHRRSLSYTRSA.

It belongs to the major facilitator superfamily. DHA1 family. Polyamines/proton antiporter (TC 2.A.1.2.16) subfamily.

It is found in the cell membrane. In terms of biological role, efflux pump involved in export of fusaric acid, a mycotoxin with low to moderate toxicity to animals and humans, but with high phytotoxic properties. Constitutes a self-protecting mechanism of the fungus against critical levels of FSA within the cell. This is Efflux pump FUB11 from Gibberella moniliformis (strain M3125 / FGSC 7600) (Maize ear and stalk rot fungus).